Here is a 272-residue protein sequence, read N- to C-terminus: MIKTKIMGILNVTPDSFSDGGQYHSVDQAVKRAKEMIDEGVDIIDVGGVSTRPGHKEVSHKEVSLKEEMNRVLPVVESIVKYDVQISVDTFRSEVAEACLKLGVSMINDQWAGLFDSNMFNVVSQYGAEIVLTHNGDGHRDKPVVEEMLVSLLAQANKAELAGIPHNKIWLDPGIGFPKTREEENEVMARLDELVATEYPVLLATSRKRYIKEMMNQDSSPSDRDEATAATTAYGIMKGVRGVRVHNVLLNTRLAQSMDFLKENEYERHHLS.

One can recognise a Pterin-binding domain in the interval 1 to 256; that stretch reads MIKTKIMGIL…NVLLNTRLAQ (256 aa). Asn-11 contributes to the Mg(2+) binding site. Residues Thr-51, Asp-89, Asn-108, Asp-172, Lys-208, and 244–246 contribute to the (7,8-dihydropterin-6-yl)methyl diphosphate site; that span reads RVH.

The protein belongs to the DHPS family. As to quaternary structure, homodimer. Mg(2+) serves as cofactor.

It carries out the reaction (7,8-dihydropterin-6-yl)methyl diphosphate + 4-aminobenzoate = 7,8-dihydropteroate + diphosphate. It functions in the pathway cofactor biosynthesis; tetrahydrofolate biosynthesis; 7,8-dihydrofolate from 2-amino-4-hydroxy-6-hydroxymethyl-7,8-dihydropteridine diphosphate and 4-aminobenzoate: step 1/2. Its function is as follows. Catalyzes the condensation of para-aminobenzoate (pABA) with 6-hydroxymethyl-7,8-dihydropterin diphosphate (DHPt-PP) to form 7,8-dihydropteroate (H2Pte), the immediate precursor of folate derivatives. This is Dihydropteroate synthase (folP) from Staphylococcus epidermidis (strain ATCC 12228 / FDA PCI 1200).